Here is a 307-residue protein sequence, read N- to C-terminus: 3-ketodihydrosphingosine reductase TSC10 (307 aa).

L11 is an NADP(+) binding site. NADPH is bound by residues G14, S16, and G18. Positions 14 to 18 (GGSQG) match the GXSXG motif. L19 is a binding site for NADP(+). Residues R40, K44, and L74 each coordinate NADPH. The active-site Proton donor is S147. Residues Y161, K165, and S194 each coordinate NADP(+). Y161 functions as the Proton acceptor in the catalytic mechanism. K165 (lowers pKa of active site Tyr) is an active-site residue. Residues 261-281 (YFLWPLGWLLGALVNLLVVPI) traverse the membrane as a helical segment.

It belongs to the short-chain dehydrogenases/reductases (SDR) family.

It is found in the endoplasmic reticulum membrane. It catalyses the reaction sphinganine + NADP(+) = 3-oxosphinganine + NADPH + H(+). It participates in lipid metabolism; sphingolipid metabolism. In terms of biological role, catalyzes the reduction of 3'-oxosphinganine (3-ketodihydrosphingosine/KDS) to sphinganine (dihydrosphingosine/DHS), the second step of de novo sphingolipid biosynthesis. The polypeptide is 3-ketodihydrosphingosine reductase TSC10 (TSC10) (Eremothecium gossypii (strain ATCC 10895 / CBS 109.51 / FGSC 9923 / NRRL Y-1056) (Yeast)).